Here is a 279-residue protein sequence, read N- to C-terminus: 3-methyl-2-oxobutanoate hydroxymethyltransferase (279 aa).

Residues Asp-44 and Asp-83 each contribute to the Mg(2+) site. 3-methyl-2-oxobutanoate contacts are provided by residues 44–45, Asp-83, and Lys-113; that span reads DS. Glu-115 lines the Mg(2+) pocket. The Proton acceptor role is filled by Glu-182.

Belongs to the PanB family. As to quaternary structure, homodecamer; pentamer of dimers. Mg(2+) is required as a cofactor.

The protein localises to the cytoplasm. The catalysed reaction is 3-methyl-2-oxobutanoate + (6R)-5,10-methylene-5,6,7,8-tetrahydrofolate + H2O = 2-dehydropantoate + (6S)-5,6,7,8-tetrahydrofolate. It participates in cofactor biosynthesis; (R)-pantothenate biosynthesis; (R)-pantoate from 3-methyl-2-oxobutanoate: step 1/2. Its function is as follows. Catalyzes the reversible reaction in which hydroxymethyl group from 5,10-methylenetetrahydrofolate is transferred onto alpha-ketoisovalerate to form ketopantoate. The chain is 3-methyl-2-oxobutanoate hydroxymethyltransferase from Desulfotalea psychrophila (strain LSv54 / DSM 12343).